Reading from the N-terminus, the 327-residue chain is Zinc transport protein ZntB (327 aa).

At 1–273 the chain is on the cytoplasmic side; it reads MEAIKGSEVN…SRRSYTMSLM (273 aa). A helical membrane pass occupies residues 274–294; sequence AMVFLPSTFLTGLFGVNLGGI. Residues 295-300 are Periplasmic-facing; the sequence is PGGGWH. Residues 301–321 traverse the membrane as a helical segment; the sequence is LGFSVFCVALVLLIGGVTWWL. Over 322 to 327 the chain is Cytoplasmic; it reads HRSKWL.

Belongs to the CorA metal ion transporter (MIT) (TC 1.A.35) family.

The protein localises to the cell inner membrane. The enzyme catalyses Zn(2+)(out) + H(+)(out) = Zn(2+)(in) + H(+)(in). In terms of biological role, zinc transporter. Acts as a Zn(2+):proton symporter, which likely mediates zinc ion uptake. This chain is Zinc transport protein ZntB, found in Cronobacter sakazakii (strain ATCC BAA-894) (Enterobacter sakazakii).